The following is a 39-amino-acid chain: Cecropin (39 aa).

The protein resides in the secreted. Its function is as follows. Antibacterial peptide active against Gram-negative bacterium E.coli. Has no activity against Gram-positive bacterium M.luteus. Weakly active against M.luteus. This is Cecropin from Calliphora vicina (Blue blowfly).